Reading from the N-terminus, the 258-residue chain is uncharacterized protein (258 aa).

The region spanning 3-58 (VAERQQKIVEIVNMRSSIRVSELSDIFSVTEETIRRDLEKLEKEHKLSRSHGGAVS) is the HTH deoR-type domain. A DNA-binding region (H-T-H motif) is located at residues 20-39 (IRVSELSDIFSVTEETIRRD).

This is an uncharacterized protein from Bacillus subtilis (strain 168).